The primary structure comprises 249 residues: Ribonuclease 3 (249 aa).

Residues 29 to 151 (SSDIEVIKKN…LIGALYECLR (123 aa)) form the RNase III domain. Glu-65 lines the Mg(2+) pocket. The active site involves Asp-69. Residues Glu-137 and Glu-140 each contribute to the Mg(2+) site. The active site involves Glu-140. Residues 179 to 249 (NEKSALQEWS…AKEALKKLTN (71 aa)) enclose the DRBM domain. The tract at residues 227–249 (GWGSSRKKAQKEAAKEALKKLTN) is disordered. A compositionally biased stretch (basic and acidic residues) spans 236–249 (QKEAAKEALKKLTN).

This sequence belongs to the ribonuclease III family. In terms of assembly, homodimer. Mg(2+) is required as a cofactor.

The protein resides in the cytoplasm. It catalyses the reaction Endonucleolytic cleavage to 5'-phosphomonoester.. In terms of biological role, digests double-stranded RNA. Involved in the processing of primary rRNA transcript to yield the immediate precursors to the large and small rRNAs (23S and 16S). Processes some mRNAs, and tRNAs when they are encoded in the rRNA operon. Processes pre-crRNA and tracrRNA of type II CRISPR loci if present in the organism. This Prochlorococcus marinus (strain SARG / CCMP1375 / SS120) protein is Ribonuclease 3.